Consider the following 117-residue polypeptide: Anti-sigma F factor antagonist (117 aa).

Positions 3–113 constitute an STAS domain; it reads LQIEMEHHRG…DNEVNALTEL (111 aa). Serine 58 carries the phosphoserine modification.

This sequence belongs to the anti-sigma-factor antagonist family. In terms of processing, phosphorylated by SpoIIAB on a serine residue.

Its function is as follows. In the phosphorylated form it could act as an anti-anti-sigma factor that counteracts SpoIIAB and thus releases sigma f from inhibition. The chain is Anti-sigma F factor antagonist (spoIIAA) from Paenibacillus polymyxa (Bacillus polymyxa).